The primary structure comprises 599 residues: THO complex subunit 1 (599 aa).

Disordered stretches follow at residues 376 to 395 and 497 to 599; these read EKQP…RRQR and KYQA…MPVS. Over residues 502–522 the composition is skewed to basic and acidic residues; the sequence is PNEKAKRAKKEETKGGSHETE. Positions 575–585 are enriched in acidic residues; the sequence is QIEDGETEEAG.

Component of the THO complex, which is composed of THO1, THO2, THO3, THO5, THO6 and THO7.

It localises to the nucleus. In terms of biological role, acts as a component of the THO subcomplex of the TREX complex which is thought to couple mRNA transcription, processing and nuclear export. Contributes to the integrity of the endogenous trans-acting small interfering RNA (ta-siRNA) pathway. May process or transport a long RNA molecule so that it can be a template for secondary siRNA production. May participate in the trafficking of siRNA precursors to the ARGONAUTE catalytic center. Required for the generation of functional messenger ribonucleoproteins (mRNPs). Plays an important roles in plant innate immunity. This chain is THO complex subunit 1 (THO1), found in Arabidopsis thaliana (Mouse-ear cress).